We begin with the raw amino-acid sequence, 333 residues long: Nucleoid-associated protein VC0395_A1624/VC395_2154 (333 aa).

Belongs to the YejK family.

It is found in the cytoplasm. The protein localises to the nucleoid. The protein is Nucleoid-associated protein VC0395_A1624/VC395_2154 of Vibrio cholerae serotype O1 (strain ATCC 39541 / Classical Ogawa 395 / O395).